The chain runs to 229 residues: Ribonuclease 3 (229 aa).

The 130-residue stretch at 4 to 133 (WEELQESVGF…FIGALYLDNG (130 aa)) folds into the RNase III domain. Position 46 (E46) interacts with Mg(2+). D50 is a catalytic residue. The Mg(2+) site is built by D119 and E122. Residue E122 is part of the active site. The DRBM domain maps to 159–228 (DYKTQLQEIV…AQFAINQLTH (70 aa)).

This sequence belongs to the ribonuclease III family. As to quaternary structure, homodimer. Mg(2+) is required as a cofactor.

It localises to the cytoplasm. The catalysed reaction is Endonucleolytic cleavage to 5'-phosphomonoester.. In terms of biological role, digests double-stranded RNA. Involved in the processing of primary rRNA transcript to yield the immediate precursors to the large and small rRNAs (23S and 16S). Processes some mRNAs, and tRNAs when they are encoded in the rRNA operon. Processes pre-crRNA and tracrRNA of type II CRISPR loci if present in the organism. The polypeptide is Ribonuclease 3 (Listeria monocytogenes serotype 4a (strain HCC23)).